The chain runs to 276 residues: SRR1-like protein (276 aa).

Phosphoserine is present on S30. Y34 bears the Phosphotyrosine mark.

This sequence belongs to the SRR1 family.

Its function is as follows. Possible regulator involved in a circadian clock input pathway. The polypeptide is SRR1-like protein (Drosophila melanogaster (Fruit fly)).